A 577-amino-acid chain; its full sequence is Sensor histidine kinase YesM (577 aa).

The Cytoplasmic segment spans residues 1–17 (MKKRVAGWYRRMKIKDK). Residues 18–38 (LFVFLSLIMAVSFLFVYSGVQ) form a helical membrane-spanning segment. Residues 39 to 286 (YAFHVYDEQI…PFDQMFAKIS (248 aa)) lie on the Extracellular side of the membrane. A helical membrane pass occupies residues 287-307 (FMKTVIGTCFLLFFCVVLLFG). Over 308-577 (RKIANSITEP…ITIPCRNEVV (270 aa)) the chain is Cytoplasmic. The 57-residue stretch at 312–368 (NSITEPIEQLVTAMKSVQHSGIEAGVSLSLPEHTQDEAGMLNRHFTVMMKRINELME) folds into the HAMP domain. One can recognise a Histidine kinase domain in the interval 365-574 (ELMEENVEKQ…RIVITIPCRN (210 aa)). His-392 carries the post-translational modification Phosphohistidine; by autocatalysis.

It is found in the cell membrane. The enzyme catalyses ATP + protein L-histidine = ADP + protein N-phospho-L-histidine.. In terms of biological role, member of the two-component regulatory system YesM/YesN. Probably activates YesN by phosphorylation. This Bacillus subtilis (strain 168) protein is Sensor histidine kinase YesM (yesM).